The chain runs to 423 residues: T-box transcription factor T-A (423 aa).

The T-box DNA-binding region spans 44-212; that stretch reads LWTKFKELTN…HNPFAKAFLD (169 aa). Positions 215-227 are enriched in basic and acidic residues; that stretch reads ERSDHKEVPDHST. 2 disordered regions span residues 215–234 and 280–304; these read ERSD…QSGY and AAPY…SSGS. Residues 290-304 show a composition bias toward polar residues; sequence RSTTTNNYMDNSSGS.

In terms of assembly, monomer. Binds DNA as a monomer. In terms of tissue distribution, first expressed at the dorsal side of the blastula embryo. Expressed in the germ ring, shield and chordamesoderm during gastrulation and is restricted to the notochord and tailbud during somitogenesis (at protein level).

The protein localises to the nucleus. Involved in the transcriptional regulation of genes required for mesoderm differentiation, including itself. Indispensable for the formation of the notochord and the tail structure. Functions together with tbx16/spadetail in development of trunk and tail mesoderm. Functions by itself early in development to repress medial floor plate and promote notochord fate but at later times, functions together with tbx16/spadetail to promote medial floor plate formation. Acts in a parallel pathway to, but cooperates with, non-canonical wnt-signaling during tail formation. Required for the morphogenesis of Kupffer's vesicle and regulates left-right asymmetry. The polypeptide is T-box transcription factor T-A (tbxta) (Danio rerio (Zebrafish)).